A 446-amino-acid chain; its full sequence is Citrate/sodium symporter (446 aa).

Helical transmembrane passes span Ile23 to Phe43, Ala46 to Gly66, Ile79 to Phe99, Val110 to Leu130, and Ile148 to Ile168. Na(+) contacts are provided by Ile181 and Gly183. The citrate site is built by Asn186 and Gly187. 5 helical membrane passes run Ile213–Ile233, Glu267–Lys287, Ile289–Ala309, Gln335–Ile355, and Val364–Ile384. Residues Met399 and Asn401 each contribute to the Na(+) site. Positions 402, 404, 405, and 428 each coordinate citrate. A helical membrane pass occupies residues Ile425–Met445.

Belongs to the 2-hydroxycarboxylate transporter (2-HCT) (TC 2.A.24) family. As to quaternary structure, homodimer.

Its subcellular location is the cell inner membrane. It catalyses the reaction citrate(out) + 2 Na(+)(out) = citrate(in) + 2 Na(+)(in). Functionally, secondary active transporter that catalyzes the uptake of citrate across the membrane with the concomitant uptake of sodium. Is specific for citrate. The sequence is that of Citrate/sodium symporter from Salmonella dublin.